Consider the following 300-residue polypeptide: Tyrosine recombinase XerD (300 aa).

The 86-residue stretch at 5–90 folds into the Core-binding (CB) domain; that stretch reads YQCDPLIDAF…SLRRFYNYLL (86 aa). The Tyr recombinase domain occupies 111 to 294; it reads HLPDSLSESQ…ARARLQELHQ (184 aa). Active-site residues include Arg151, Lys175, His246, Arg249, and His272. The active-site O-(3'-phospho-DNA)-tyrosine intermediate is the Tyr281.

The protein belongs to the 'phage' integrase family. XerD subfamily. As to quaternary structure, forms a cyclic heterotetrameric complex composed of two molecules of XerC and two molecules of XerD.

It localises to the cytoplasm. Site-specific tyrosine recombinase, which acts by catalyzing the cutting and rejoining of the recombining DNA molecules. The XerC-XerD complex is essential to convert dimers of the bacterial chromosome into monomers to permit their segregation at cell division. It also contributes to the segregational stability of plasmids. This Shewanella oneidensis (strain ATCC 700550 / JCM 31522 / CIP 106686 / LMG 19005 / NCIMB 14063 / MR-1) protein is Tyrosine recombinase XerD.